A 137-amino-acid polypeptide reads, in one-letter code: Large-conductance mechanosensitive channel (137 aa).

2 helical membrane passes run 9 to 29 (AFAVKGNVVDMAVGIIIGAAF) and 79 to 99 (IQTILDFVIVAFAIFMGVKAI).

Belongs to the MscL family. As to quaternary structure, homopentamer.

It localises to the cell inner membrane. In terms of biological role, channel that opens in response to stretch forces in the membrane lipid bilayer. May participate in the regulation of osmotic pressure changes within the cell. The polypeptide is Large-conductance mechanosensitive channel (Pseudomonas paraeruginosa (strain DSM 24068 / PA7) (Pseudomonas aeruginosa (strain PA7))).